The chain runs to 47 residues: Photosystem II reaction center protein K (47 aa).

The propeptide occupies 1-10 (MAVYTLDLLA). The helical transmembrane segment at 19-39 (FGPLIDILPIIPLFFLLLAFV) threads the bilayer.

Belongs to the PsbK family. PSII is composed of 1 copy each of membrane proteins PsbA, PsbB, PsbC, PsbD, PsbE, PsbF, PsbH, PsbI, PsbJ, PsbK, PsbL, PsbM, PsbT, PsbX, PsbY, PsbZ, Psb30/Ycf12, peripheral proteins PsbO, CyanoQ (PsbQ), PsbU, PsbV and a large number of cofactors. It forms dimeric complexes.

The protein localises to the cellular thylakoid membrane. Functionally, one of the components of the core complex of photosystem II (PSII). PSII is a light-driven water:plastoquinone oxidoreductase that uses light energy to abstract electrons from H(2)O, generating O(2) and a proton gradient subsequently used for ATP formation. It consists of a core antenna complex that captures photons, and an electron transfer chain that converts photonic excitation into a charge separation. The chain is Photosystem II reaction center protein K from Synechococcus sp. (strain CC9311).